Consider the following 795-residue polypeptide: Arcadin-4 (795 aa).

Coiled coils occupy residues 205–253, 323–412, and 450–618; these read YSGL…HEQI, YDAL…YTSL, and FGGV…LKKR.

Its subcellular location is the cytoplasm. The protein localises to the cytoskeleton. Its function is as follows. Part of an actin-like archaeal cytoskeleton. The polypeptide is Arcadin-4 (Pyrobaculum calidifontis (strain DSM 21063 / JCM 11548 / VA1)).